Reading from the N-terminus, the 274-residue chain is ATP synthase subunit b 2 (274 aa).

Residues 2–22 (HIDWFVLLAQLVNFLILIYLL) traverse the membrane as a helical segment.

Belongs to the ATPase B chain family. F-type ATPases have 2 components, F(1) - the catalytic core - and F(0) - the membrane proton channel. F(1) has five subunits: alpha(3), beta(3), gamma(1), delta(1), epsilon(1). F(0) has three main subunits: a(1), b(2) and c(10-14). The alpha and beta chains form an alternating ring which encloses part of the gamma chain. F(1) is attached to F(0) by a central stalk formed by the gamma and epsilon chains, while a peripheral stalk is formed by the delta and b chains.

The protein resides in the cell inner membrane. In terms of biological role, f(1)F(0) ATP synthase produces ATP from ADP in the presence of a proton or sodium gradient. F-type ATPases consist of two structural domains, F(1) containing the extramembraneous catalytic core and F(0) containing the membrane proton channel, linked together by a central stalk and a peripheral stalk. During catalysis, ATP synthesis in the catalytic domain of F(1) is coupled via a rotary mechanism of the central stalk subunits to proton translocation. Functionally, component of the F(0) channel, it forms part of the peripheral stalk, linking F(1) to F(0). The chain is ATP synthase subunit b 2 from Syntrophus aciditrophicus (strain SB).